Here is a 217-residue protein sequence, read N- to C-terminus: Ribonuclease HII (217 aa).

One can recognise an RNase H type-2 domain in the interval 12 to 201; the sequence is DLVAGVDEVG…VRTAHEARAA (190 aa). Residues Asp-18, Glu-19, and Asp-110 each coordinate a divalent metal cation.

Belongs to the RNase HII family. Requires Mn(2+) as cofactor. It depends on Mg(2+) as a cofactor.

The protein localises to the cytoplasm. The catalysed reaction is Endonucleolytic cleavage to 5'-phosphomonoester.. Endonuclease that specifically degrades the RNA of RNA-DNA hybrids. This Pseudomonas syringae pv. tomato (strain ATCC BAA-871 / DC3000) protein is Ribonuclease HII.